The chain runs to 447 residues: UDP-N-acetylmuramate--L-alanine ligase (447 aa).

Gly107–Thr113 contributes to the ATP binding site.

It belongs to the MurCDEF family.

Its subcellular location is the cytoplasm. It catalyses the reaction UDP-N-acetyl-alpha-D-muramate + L-alanine + ATP = UDP-N-acetyl-alpha-D-muramoyl-L-alanine + ADP + phosphate + H(+). The protein operates within cell wall biogenesis; peptidoglycan biosynthesis. In terms of biological role, cell wall formation. The chain is UDP-N-acetylmuramate--L-alanine ligase from Rubrobacter xylanophilus (strain DSM 9941 / JCM 11954 / NBRC 16129 / PRD-1).